The following is a 243-amino-acid chain: Vimentin A2 (243 aa).

The segment at 1-22 (GFSLQDELDFLKKLHDEELADV) is coil 1B. Positions 1 to 188 (GFSLQDELDF…KLLEGEESRI (188 aa)) constitute an IF rod domain. The segment at 23-45 (QAQIQDQQVQVDMDMAKPDLTAA) is linker 12. Residues 46–184 (LRDVRLQYEN…ATYRKLLEGE (139 aa)) are coil 2. Positions 185–243 (ESRITTPLPNLSSFNLRDAILETKPILENTFSKKVLIKTIETRDGEVINESTQNHDDLE) are tail.

This sequence belongs to the intermediate filament family. As to quaternary structure, homomer. Post-translationally, one of the most prominent phosphoproteins in various cells of mesenchymal origin. Phosphorylation is enhanced during cell division, at which time vimentin filaments are significantly reorganized. In terms of tissue distribution, expressed in low amounts in retina, optic nerve, and brain and in higher amounts in spinal cord.

Its function is as follows. Vimentins are class-III intermediate filaments found in various non-epithelial cells, especially mesenchymal cells. Vimentin is attached to the nucleus, endoplasmic reticulum, and mitochondria, either laterally or terminally. The sequence is that of Vimentin A2 from Carassius auratus (Goldfish).